We begin with the raw amino-acid sequence, 225 residues long: Uridylate kinase (225 aa).

Position 9–10 (9–10 (GS)) interacts with ATP. G44 provides a ligand contact to UMP. G45 and R49 together coordinate ATP. UMP is bound by residues D66 and 114 to 120 (THPGHTT). Residues T140, N141, Y146, and D149 each coordinate ATP.

The protein belongs to the UMP kinase family. As to quaternary structure, homohexamer.

The protein resides in the cytoplasm. It carries out the reaction UMP + ATP = UDP + ADP. It participates in pyrimidine metabolism; CTP biosynthesis via de novo pathway; UDP from UMP (UMPK route): step 1/1. Inhibited by UTP. Functionally, catalyzes the reversible phosphorylation of UMP to UDP. The polypeptide is Uridylate kinase (Thermococcus sibiricus (strain DSM 12597 / MM 739)).